A 79-amino-acid polypeptide reads, in one-letter code: Small ribosomal subunit protein bS16 (79 aa).

It belongs to the bacterial ribosomal protein bS16 family.

In Solidesulfovibrio magneticus (strain ATCC 700980 / DSM 13731 / RS-1) (Desulfovibrio magneticus), this protein is Small ribosomal subunit protein bS16.